Consider the following 362-residue polypeptide: 3-dehydroquinate synthase (362 aa).

Residues 71–76 (DGEQYK), 105–109 (GVVGD), 129–130 (TT), K142, K151, and 169–172 (CLNT) each bind NAD(+). Residues E184, H247, and H264 each contribute to the Zn(2+) site.

The protein belongs to the sugar phosphate cyclases superfamily. Dehydroquinate synthase family. Requires Co(2+) as cofactor. Zn(2+) serves as cofactor. The cofactor is NAD(+).

The protein resides in the cytoplasm. The catalysed reaction is 7-phospho-2-dehydro-3-deoxy-D-arabino-heptonate = 3-dehydroquinate + phosphate. The protein operates within metabolic intermediate biosynthesis; chorismate biosynthesis; chorismate from D-erythrose 4-phosphate and phosphoenolpyruvate: step 2/7. Functionally, catalyzes the conversion of 3-deoxy-D-arabino-heptulosonate 7-phosphate (DAHP) to dehydroquinate (DHQ). This Enterobacter sp. (strain 638) protein is 3-dehydroquinate synthase.